The chain runs to 59 residues: Large ribosomal subunit protein bL33 (59 aa).

This sequence belongs to the bacterial ribosomal protein bL33 family.

In Neorickettsia sennetsu (strain ATCC VR-367 / Miyayama) (Ehrlichia sennetsu), this protein is Large ribosomal subunit protein bL33.